Here is a 100-residue protein sequence, read N- to C-terminus: Aspartyl/glutamyl-tRNA(Asn/Gln) amidotransferase subunit C (100 aa).

Belongs to the GatC family. In terms of assembly, heterotrimer of A, B and C subunits.

It catalyses the reaction L-glutamyl-tRNA(Gln) + L-glutamine + ATP + H2O = L-glutaminyl-tRNA(Gln) + L-glutamate + ADP + phosphate + H(+). It carries out the reaction L-aspartyl-tRNA(Asn) + L-glutamine + ATP + H2O = L-asparaginyl-tRNA(Asn) + L-glutamate + ADP + phosphate + 2 H(+). In terms of biological role, allows the formation of correctly charged Asn-tRNA(Asn) or Gln-tRNA(Gln) through the transamidation of misacylated Asp-tRNA(Asn) or Glu-tRNA(Gln) in organisms which lack either or both of asparaginyl-tRNA or glutaminyl-tRNA synthetases. The reaction takes place in the presence of glutamine and ATP through an activated phospho-Asp-tRNA(Asn) or phospho-Glu-tRNA(Gln). The chain is Aspartyl/glutamyl-tRNA(Asn/Gln) amidotransferase subunit C from Staphylococcus saprophyticus subsp. saprophyticus (strain ATCC 15305 / DSM 20229 / NCIMB 8711 / NCTC 7292 / S-41).